Consider the following 345-residue polypeptide: Alanine racemase (345 aa).

The active-site Proton acceptor; specific for D-alanine is the K33. N6-(pyridoxal phosphate)lysine is present on K33. Residue R128 coordinates substrate. The active-site Proton acceptor; specific for L-alanine is the Y242. Residue M291 coordinates substrate.

It belongs to the alanine racemase family. Pyridoxal 5'-phosphate is required as a cofactor.

The catalysed reaction is L-alanine = D-alanine. The protein operates within amino-acid biosynthesis; D-alanine biosynthesis; D-alanine from L-alanine: step 1/1. Functionally, catalyzes the interconversion of L-alanine and D-alanine. May also act on other amino acids. The protein is Alanine racemase (alr) of Ruegeria sp. (strain TM1040) (Silicibacter sp.).